The chain runs to 346 residues: Protease inhibitor Egf1.5b (346 aa).

The signal sequence occupies residues 1-28 (MYIDTGIMSNNIFLFAFFALVGLTRIEA). Residues 52-104 (CRENEHYNSTRIECEDECNDRNNKLCYRFQQFCWCNEGYIRNSSHICVKLEDC) enclose the TIL domain.

Belongs to the polydnaviridae EGF-like motif protein family. In terms of assembly, interacts with host PAP1, PAP3 and SPH2.

Its function is as follows. Counteracts the host humoral immune response by inhibiting the processing and the amidolytic activity of host PAP1 and PAP3. Thereby, melanization of host hemolymph, normally producing several reactive intermediates toxic for viruses, is deregulated and proper immune response cannot occur. The chain is Protease inhibitor Egf1.5b (O5) from Microplitis demolitor (Parasitoid wasp).